Here is a 156-residue protein sequence, read N- to C-terminus: Endoribonuclease YbeY (156 aa).

3 residues coordinate Zn(2+): histidine 119, histidine 123, and histidine 129.

The protein belongs to the endoribonuclease YbeY family. Zn(2+) serves as cofactor.

The protein localises to the cytoplasm. Single strand-specific metallo-endoribonuclease involved in late-stage 70S ribosome quality control and in maturation of the 3' terminus of the 16S rRNA. The sequence is that of Endoribonuclease YbeY from Buchnera aphidicola subsp. Cinara cedri (strain Cc).